A 178-amino-acid polypeptide reads, in one-letter code: Large ribosomal subunit protein bL25 (178 aa).

This sequence belongs to the bacterial ribosomal protein bL25 family. CTC subfamily. In terms of assembly, part of the 50S ribosomal subunit; part of the 5S rRNA/L5/L18/L25 subcomplex. Contacts the 5S rRNA. Binds to the 5S rRNA independently of L5 and L18.

Its function is as follows. This is one of the proteins that binds to the 5S RNA in the ribosome where it forms part of the central protuberance. This Helicobacter hepaticus (strain ATCC 51449 / 3B1) protein is Large ribosomal subunit protein bL25.